A 73-amino-acid polypeptide reads, in one-letter code: Translation initiation factor IF-1 3 (73 aa).

The S1-like domain occupies 1-72 (MAKEELVEFG…TKGRINYRHK (72 aa)).

This sequence belongs to the IF-1 family. In terms of assembly, component of the 30S ribosomal translation pre-initiation complex which assembles on the 30S ribosome in the order IF-2 and IF-3, IF-1 and N-formylmethionyl-tRNA(fMet); mRNA recruitment can occur at any time during PIC assembly.

The protein resides in the cytoplasm. In terms of biological role, one of the essential components for the initiation of protein synthesis. Stabilizes the binding of IF-2 and IF-3 on the 30S subunit to which N-formylmethionyl-tRNA(fMet) subsequently binds. Helps modulate mRNA selection, yielding the 30S pre-initiation complex (PIC). Upon addition of the 50S ribosomal subunit IF-1, IF-2 and IF-3 are released leaving the mature 70S translation initiation complex. The polypeptide is Translation initiation factor IF-1 3 (Cupriavidus pinatubonensis (strain JMP 134 / LMG 1197) (Cupriavidus necator (strain JMP 134))).